An 895-amino-acid chain; its full sequence is AP-1 complex subunit gamma (895 aa).

5 HEAT repeats span residues Thr130 to Val166, Pro167 to Thr205, Lys211 to Gln256, Asn301 to Gln339, and Val341 to Ile376. Disordered stretches follow at residues Lys591–Met687, Asn706–Ser733, and Gln746–Val770. Composition is skewed to low complexity over residues Pro604–Gln626, Gln639–Ala658, Asn675–Met687, Asn706–Asn731, and Gln746–Thr765. The GAE domain occupies Pro775–Ser893.

This sequence belongs to the adaptor complexes large subunit family. In terms of assembly, adaptor protein complex 1 (AP-1) is a heterotetramer composed of two large adaptins (gamma-type subunit and beta-type subunit), a medium adaptin (mu-type subunit) and a small adaptin (sigma-type subunit). Interacts with rhgA.

Its subcellular location is the golgi apparatus. The protein resides in the trans-Golgi network. It is found in the cytoplasmic vesicle. The protein localises to the clathrin-coated vesicle membrane. Functionally, subunit of clathrin-associated adaptor protein complex 1 that plays a role in protein sorting in the trans-Golgi network (TGN) and endosomes. The AP complexes mediate the recruitment of clathrin to membranes and the recognition of sorting signals within the cytosolic tails of transmembrane cargo molecules. Also involved in early steps of phagocytosis and macropinocytosis. In Dictyostelium discoideum (Social amoeba), this protein is AP-1 complex subunit gamma (ap1g1).